The primary structure comprises 63 residues: Cytochrome c oxidase subunit 7C, mitochondrial (63 aa).

Residues 1-16 (MLGHSIRRFTTSVVRR) constitute a mitochondrion transit peptide. The Mitochondrial matrix segment spans residues 17–33 (SHYEEGPGKNLPFSVEN). Residue Lys-25 is modified to N6-acetyllysine; alternate. An N6-succinyllysine; alternate modification is found at Lys-25. A helical transmembrane segment spans residues 34–60 (KWTLLVKMCLFFGSAFSVPFLIVRHQL). At 61-63 (LKQ) the chain is on the mitochondrial intermembrane side.

It belongs to the cytochrome c oxidase VIIc family. In terms of assembly, component of the cytochrome c oxidase (complex IV, CIV), a multisubunit enzyme composed of 14 subunits. The complex is composed of a catalytic core of 3 subunits MT-CO1, MT-CO2 and MT-CO3, encoded in the mitochondrial DNA, and 11 supernumerary subunits COX4I, COX5A, COX5B, COX6A, COX6B, COX6C, COX7A, COX7B, COX7C, COX8 and NDUFA4, which are encoded in the nuclear genome. The complex exists as a monomer or a dimer and forms supercomplexes (SCs) in the inner mitochondrial membrane with NADH-ubiquinone oxidoreductase (complex I, CI) and ubiquinol-cytochrome c oxidoreductase (cytochrome b-c1 complex, complex III, CIII), resulting in different assemblies (supercomplex SCI(1)III(2)IV(1) and megacomplex MCI(2)III(2)IV(2)). Interacts with RAB5IF.

The protein localises to the mitochondrion inner membrane. The protein operates within energy metabolism; oxidative phosphorylation. Component of the cytochrome c oxidase, the last enzyme in the mitochondrial electron transport chain which drives oxidative phosphorylation. The respiratory chain contains 3 multisubunit complexes succinate dehydrogenase (complex II, CII), ubiquinol-cytochrome c oxidoreductase (cytochrome b-c1 complex, complex III, CIII) and cytochrome c oxidase (complex IV, CIV), that cooperate to transfer electrons derived from NADH and succinate to molecular oxygen, creating an electrochemical gradient over the inner membrane that drives transmembrane transport and the ATP synthase. Cytochrome c oxidase is the component of the respiratory chain that catalyzes the reduction of oxygen to water. Electrons originating from reduced cytochrome c in the intermembrane space (IMS) are transferred via the dinuclear copper A center (CU(A)) of subunit 2 and heme A of subunit 1 to the active site in subunit 1, a binuclear center (BNC) formed by heme A3 and copper B (CU(B)). The BNC reduces molecular oxygen to 2 water molecules using 4 electrons from cytochrome c in the IMS and 4 protons from the mitochondrial matrix. The sequence is that of Cytochrome c oxidase subunit 7C, mitochondrial (COX7C) from Macaca fascicularis (Crab-eating macaque).